Consider the following 208-residue polypeptide: ER membrane protein complex subunit 8/9 homolog (208 aa).

Positions 11 to 146 (YEISQNAYIK…ERSPVMQLCV (136 aa)) constitute an MPN domain.

The protein belongs to the EMC8/EMC9 family.

This Arabidopsis thaliana (Mouse-ear cress) protein is ER membrane protein complex subunit 8/9 homolog (EMB2731).